The sequence spans 507 residues: MEKLQYELQGYLEIDRYRKQRFLYPLLFREYIYALAHDHGLNSSIFYEPTENLGYDNDNKSSSLIVKRLITRLHQQNHLTISVNDSRFVGPNRSFYSQTIPEGFAGIMEIPFSVRLVSSLERERIAKYHNLRSIHSIFPFLEDKLSHLYYVSDILIPYPIHLEILLQTLRTRIRDAPSLHLLRCFLHEHHNWNSLITSNKSISIFSKENQRLFLFLYNSHVYECESVLVFLRKQSSHLRSISSLAFLERTHFYGKIKHLVVTPRNDSQRTLPLWFFKEPLMHYVRYQGKSIMASRCTNLLMKKWKYYLVNFWQCHFHLWSQPGRIHINELSNHSFYFLGYLSGVRLTPWVIRSQMLENSFMIDTAIKRFDTIVPIFPLIGSLVKAKFCNVSGYPISKSVWADSSDSDIIARFGWICRNLSHYHSGSSKKHSLCRIKYILRLSCARTLARKHKSTVRAICKRLGSKLLEEFLTEEHEIVSFIFRRTRLRSERIWYLDIIRIHGLVPHS.

The protein belongs to the intron maturase 2 family. MatK subfamily.

It localises to the plastid. It is found in the chloroplast. Usually encoded in the trnK tRNA gene intron. Probably assists in splicing its own and other chloroplast group II introns. The sequence is that of Maturase K from Nymphaea alba (White water-lily).